We begin with the raw amino-acid sequence, 390 residues long: MSHNSFGHLFRVTTFGESHGPALGCVVDGCPPLIPLDAAEIQAELDRRRPGQSRFTTQRREPDAVRILSGVFADDRTGGRQLTTGTPIALMIENVDQRSKDYSDIRDTYRPGHADYTYEAKYGIRDYRGGGRSSARETAARVAAGAIARKVLPGVTIRGALVQMGPHAIDRARFDWAEVGNNPFFCPDAEAAARWAEVLDGVRKDGSSLGAVIEVVAEGVPPGLGAPVYGKLDADLAAAMMSINAVKGVEIGDGFAAAALRGEENADEMRPGHGGAPSFLANHAGGILGGISTGQAVVCRFAVKPTSSILTPRASVTRDNRPTDVLTRGRHDPCVGIRAVPVGEAMMACVLADHVLRHRGQVGAHPAGAHPAGADPAGTHPGGPGGFQPG.

2 residues coordinate NADP(+): Arg-48 and Arg-54. FMN contacts are provided by residues 132 to 134, 244 to 245, Gly-289, 304 to 308, and Arg-330; these read RSS, NA, and KPTSS. The tract at residues 362-390 is disordered; that stretch reads VGAHPAGAHPAGADPAGTHPGGPGGFQPG. A compositionally biased stretch (low complexity) spans 363 to 379; it reads GAHPAGAHPAGADPAGT. The span at 380–390 shows a compositional bias: gly residues; the sequence is HPGGPGGFQPG.

It belongs to the chorismate synthase family. In terms of assembly, homotetramer. FMNH2 serves as cofactor.

The enzyme catalyses 5-O-(1-carboxyvinyl)-3-phosphoshikimate = chorismate + phosphate. It participates in metabolic intermediate biosynthesis; chorismate biosynthesis; chorismate from D-erythrose 4-phosphate and phosphoenolpyruvate: step 7/7. Catalyzes the anti-1,4-elimination of the C-3 phosphate and the C-6 proR hydrogen from 5-enolpyruvylshikimate-3-phosphate (EPSP) to yield chorismate, which is the branch point compound that serves as the starting substrate for the three terminal pathways of aromatic amino acid biosynthesis. This reaction introduces a second double bond into the aromatic ring system. This is Chorismate synthase from Methylobacterium sp. (strain 4-46).